We begin with the raw amino-acid sequence, 131 residues long: Snaclec macrovipecetin subunit alpha (131 aa).

Disulfide bonds link C2/C13, C30/C125, and C100/C117. One can recognise a C-type lectin domain in the interval 9 to 126; it reads HEEHCYKVFR…CEDKNPFICK (118 aa).

In terms of assembly, heterodimer of subunits alpha and beta; disulfide-linked. In terms of tissue distribution, expressed by the venom gland.

It is found in the secreted. Interferes with one step of hemostasis (modulation of platelet aggregation, or coagulation cascade, for example). The chain is Snaclec macrovipecetin subunit alpha from Macrovipera lebetinus (Levantine viper).